The primary structure comprises 571 residues: Streptolysin O (571 aa).

An N-terminal signal peptide occupies residues 1-33; that stretch reads MSNKKTFKKYSRVAGLLTAALIIGNLVTANAES. The segment at 30 to 108 is disordered; the sequence is NAESNKQNTA…KKSEEDHTEE (79 aa). The segment covering 37–48 has biased composition (low complexity); the sequence is NTASTETTTTNE. 2 stretches are compositionally biased toward basic and acidic residues: residues 50 to 68 and 79 to 108; these read PKPE…KTDD and APKE…HTEE. The next 4 beta stranded transmembrane spans lie at 260-273, 280-289, 358-367, and 375-387; these read KSQI…NSKI, IDFKSISKGE, SNDVEAAFSA, and KTNG…LENS. Positions 529–539 match the Conserved undecapeptide motif; sequence ECTGLAWEWWR. The Cholesterol binding signature appears at 561 to 562; sequence TL.

The protein belongs to the cholesterol-dependent cytolysin family. Homooligomeric pore complex of 35 to 50 subunits; when inserted in the host membrane.

It is found in the secreted. Its subcellular location is the host cell membrane. A cholesterol-dependent toxin that causes cytolysis by forming pores in cholesterol containing host membranes. After binding to target membranes, the protein undergoes a major conformation change, leading to its insertion in the host membrane and formation of an oligomeric pore complex. Cholesterol is required for binding to host membranes, membrane insertion and pore formation; cholesterol binding is mediated by a Thr-Leu pair in the C-terminus. Can be reversibly inactivated by oxidation. The protein is Streptolysin O (slo) of Streptococcus pyogenes serotype M3 (strain ATCC BAA-595 / MGAS315).